Consider the following 289-residue polypeptide: Right origin-binding protein (289 aa).

The region spanning 8–106 is the HTH araC/xylS-type domain; that stretch reads RDLLIWLEGH…AQTPALYRRS (99 aa). 2 DNA-binding regions (H-T-H motif) span residues 25–46 and 73–96; these read DNVA…KDVT and ILDI…KKQF.

In terms of biological role, transcriptional regulator. Binds to the right arm of the replication origin oriC of the chromosome. Rob binding may influence the formation of the nucleoprotein structure, required for oriC function in the initiation of replication. In Escherichia coli O157:H7, this protein is Right origin-binding protein (rob).